Consider the following 225-residue polypeptide: Cytidylate kinase (225 aa).

11-19 lines the ATP pocket; that stretch reads GPAAAGKST.

This sequence belongs to the cytidylate kinase family. Type 1 subfamily.

It localises to the cytoplasm. The catalysed reaction is CMP + ATP = CDP + ADP. It carries out the reaction dCMP + ATP = dCDP + ADP. This Bacillus cytotoxicus (strain DSM 22905 / CIP 110041 / 391-98 / NVH 391-98) protein is Cytidylate kinase.